The primary structure comprises 156 residues: MKLQLIAVGHKMPDWINAGYADYVRRMPGDLQLALTEIKPGHRVAGADGARARQLEAARILAAITPGAVRVVLDERGTQATTRELAGWLENWMGEGLTPAFVIGGADGLDDSVKAGAGKLFGLSRLTLPHALARVILAEQLYRAACIIKGHPYHRD.

S-adenosyl-L-methionine contacts are provided by residues leucine 73, glycine 104, and 123 to 128; that span reads LSRLTL.

Belongs to the RNA methyltransferase RlmH family. As to quaternary structure, homodimer.

The protein resides in the cytoplasm. It carries out the reaction pseudouridine(1915) in 23S rRNA + S-adenosyl-L-methionine = N(3)-methylpseudouridine(1915) in 23S rRNA + S-adenosyl-L-homocysteine + H(+). In terms of biological role, specifically methylates the pseudouridine at position 1915 (m3Psi1915) in 23S rRNA. The polypeptide is Ribosomal RNA large subunit methyltransferase H (Thiobacillus denitrificans (strain ATCC 25259 / T1)).